The primary structure comprises 84 residues: Small ribosomal subunit protein uS17 (84 aa).

This sequence belongs to the universal ribosomal protein uS17 family. As to quaternary structure, part of the 30S ribosomal subunit.

Its function is as follows. One of the primary rRNA binding proteins, it binds specifically to the 5'-end of 16S ribosomal RNA. The sequence is that of Small ribosomal subunit protein uS17 from Clostridium botulinum (strain Okra / Type B1).